Reading from the N-terminus, the 93-residue chain is MSRSLKKGPFADPSLLKKIEQLKGQSKKPVIRTWSRRSTIFPSFIGFTIAVYDGRKHVPVYIQDDMVGHKLGEFVPTRTFRGHAGSDDKKTGK.

It belongs to the universal ribosomal protein uS19 family.

Protein S19 forms a complex with S13 that binds strongly to the 16S ribosomal RNA. This is Small ribosomal subunit protein uS19 from Oenococcus oeni (strain ATCC BAA-331 / PSU-1).